The chain runs to 418 residues: Glutamyl-tRNA reductase (418 aa).

Substrate is bound by residues 49–52 (TCNR), serine 109, 114–116 (EPQ), and glutamine 120. The active-site Nucleophile is the cysteine 50. 189-194 (GAGETI) lines the NADP(+) pocket.

Belongs to the glutamyl-tRNA reductase family. As to quaternary structure, homodimer.

The enzyme catalyses (S)-4-amino-5-oxopentanoate + tRNA(Glu) + NADP(+) = L-glutamyl-tRNA(Glu) + NADPH + H(+). It participates in porphyrin-containing compound metabolism; protoporphyrin-IX biosynthesis; 5-aminolevulinate from L-glutamyl-tRNA(Glu): step 1/2. Its function is as follows. Catalyzes the NADPH-dependent reduction of glutamyl-tRNA(Glu) to glutamate 1-semialdehyde (GSA). The sequence is that of Glutamyl-tRNA reductase from Salmonella dublin (strain CT_02021853).